The following is a 311-amino-acid chain: Pyrimidine-specific ribonucleoside hydrolase RihA (311 aa).

The active site involves His240.

It belongs to the IUNH family. RihA subfamily.

Functionally, hydrolyzes cytidine or uridine to ribose and cytosine or uracil, respectively. The polypeptide is Pyrimidine-specific ribonucleoside hydrolase RihA (Salmonella arizonae (strain ATCC BAA-731 / CDC346-86 / RSK2980)).